The sequence spans 566 residues: DNA ligase B (566 aa).

Residue K125 is the N6-AMP-lysine intermediate of the active site.

This sequence belongs to the NAD-dependent DNA ligase family. LigB subfamily.

The enzyme catalyses NAD(+) + (deoxyribonucleotide)n-3'-hydroxyl + 5'-phospho-(deoxyribonucleotide)m = (deoxyribonucleotide)n+m + AMP + beta-nicotinamide D-nucleotide.. Functionally, catalyzes the formation of phosphodiester linkages between 5'-phosphoryl and 3'-hydroxyl groups in double-stranded DNA using NAD as a coenzyme and as the energy source for the reaction. This chain is DNA ligase B, found in Pseudomonas putida (strain ATCC 47054 / DSM 6125 / CFBP 8728 / NCIMB 11950 / KT2440).